A 197-amino-acid chain; its full sequence is Carnitine operon protein CaiE (197 aa).

This sequence belongs to the transferase hexapeptide repeat family.

It participates in amine and polyamine metabolism; carnitine metabolism. Its function is as follows. Overproduction of CaiE stimulates the activity of CaiB and CaiD. The sequence is that of Carnitine operon protein CaiE from Citrobacter koseri (strain ATCC BAA-895 / CDC 4225-83 / SGSC4696).